A 138-amino-acid chain; its full sequence is Large ribosomal subunit protein uL16 (138 aa).

This sequence belongs to the universal ribosomal protein uL16 family. As to quaternary structure, part of the 50S ribosomal subunit.

Binds 23S rRNA and is also seen to make contacts with the A and possibly P site tRNAs. In Gluconobacter oxydans (strain 621H) (Gluconobacter suboxydans), this protein is Large ribosomal subunit protein uL16.